Reading from the N-terminus, the 287-residue chain is Elongation factor Ts (287 aa).

The interval 80 to 83 is involved in Mg(2+) ion dislocation from EF-Tu; the sequence is TDFL.

The protein belongs to the EF-Ts family.

The protein localises to the cytoplasm. Functionally, associates with the EF-Tu.GDP complex and induces the exchange of GDP to GTP. It remains bound to the aminoacyl-tRNA.EF-Tu.GTP complex up to the GTP hydrolysis stage on the ribosome. This Pseudomonas savastanoi pv. phaseolicola (strain 1448A / Race 6) (Pseudomonas syringae pv. phaseolicola (strain 1448A / Race 6)) protein is Elongation factor Ts.